Consider the following 311-residue polypeptide: L-lactate dehydrogenase (311 aa).

NAD(+)-binding positions include valine 12, aspartate 33, lysine 38, tyrosine 63, and 77–78; that span reads GA. Substrate contacts are provided by residues glutamine 80, arginine 86, and 118–121; that span reads NPVD. Residues 116–118 and serine 141 each bind NAD(+); that span reads VTN. 146–149 provides a ligand contact to substrate; the sequence is DSAR. Positions 151 and 166 each coordinate beta-D-fructose 1,6-bisphosphate. Catalysis depends on histidine 173, which acts as the Proton acceptor. Position 219 is a phosphotyrosine (tyrosine 219). Residue threonine 228 participates in substrate binding.

The protein belongs to the LDH/MDH superfamily. LDH family. In terms of assembly, homotetramer.

It is found in the cytoplasm. It catalyses the reaction (S)-lactate + NAD(+) = pyruvate + NADH + H(+). Its pathway is fermentation; pyruvate fermentation to lactate; (S)-lactate from pyruvate: step 1/1. Its activity is regulated as follows. Allosterically activated by fructose 1,6-bisphosphate (FBP). Its function is as follows. Catalyzes the conversion of lactate to pyruvate. This Thermoanaerobacter pseudethanolicus (strain ATCC 33223 / 39E) (Clostridium thermohydrosulfuricum) protein is L-lactate dehydrogenase.